A 63-amino-acid polypeptide reads, in one-letter code: MGMRMMFTVFLLVVLATTVVSFTSDRAPDGRNAAAKAFGLITPTVRKGCCSNPACMLKNPNLC.

Positions 1 to 21 are cleaved as a signal peptide; the sequence is MGMRMMFTVFLLVVLATTVVS. The propeptide occupies 22–47; that stretch reads FTSDRAPDGRNAAAKAFGLITPTVRK. 2 disulfides stabilise this stretch: Cys-49–Cys-55 and Cys-50–Cys-63. Residues 51-53 are ser-Xaa-Pro motif, crucial for potent interaction with nAChR; the sequence is SNP.

The protein belongs to the conotoxin A superfamily. Expressed by the venom duct.

Its subcellular location is the secreted. Its function is as follows. This amidated peptide potently and teversibly inhibits Cav2.2/CACNA1B. Steady-state inactivation is enhanced at hyperpolarized membrane potentials. Also shows a weak interaction at alpha-3-beta-4/ CHRNA3-CHRNB4 and alpha-7/CHRNA7 nAChRs subtypes. In vivo, exhibits a potent analgesic activity in rat partial sciatic nerve injury and chronic constriction injury models. This Conus eburneus (Ivory cone) protein is Omega-conotoxin Eu1.6.